The sequence spans 385 residues: MAWSQSARKPMIGLLFRAQQHGARGYSYSAFQAHLSSSNVDQSATLLRRFSSEVPASEQMNLIKQLRERTSAPIKDVKASLVSCNWDIDAAQKDLRKRGVVLAAKKSSRTAAEGLLAIAQDEKRAAVVELNCETDFVARNDVFQYLASSLAKLALSARDPGELVFPFGPDYLEVNLNVNLDHPKLSGETTVQSAVTELAAMVGENVKFRRGFIMSTTAHGVVCSYMHTCPQPGLGRLAGLITLEAEDSNAPLDALQRVGKSIAMHIVATKPLFLSKELVSASAVENERDILRTQAESSGKSQMAMEKMVEGRLRKYFEEVVLLEQKYVVNDSTNIKSVLNDLSKEVGSKVTVGNFARMEVGEGVSKLFQQILIVTRKRKEWILSK.

The transit peptide at Met-1 to Phe-50 directs the protein to the mitochondrion.

The protein belongs to the EF-Ts family.

Its subcellular location is the mitochondrion. Associates with the EF-Tu.GDP complex and induces the exchange of GDP to GTP. It remains bound to the aminoacyl-tRNA.EF-Tu.GTP complex up to the GTP hydrolysis stage on the ribosome. In Oryza sativa subsp. indica (Rice), this protein is Elongation factor Ts, mitochondrial.